An 802-amino-acid polypeptide reads, in one-letter code: Fibroblast growth factor receptor 3 (802 aa).

One can recognise an Ig-like C2-type 1 domain in the interval 27 to 115; that stretch reads PDYLMVEQPP…ILRNFTIRVT (89 aa). A disulfide bridge connects residues cysteine 52 and cysteine 98. N-linked (GlcNAc...) asparagine glycosylation is found at asparagine 74, asparagine 87, and asparagine 109. Positions 116 to 148 are disordered; the sequence is DLPSSGDDEDDDDDDDDETEDREPPRWTQPERM. Residues 121–136 are compositionally biased toward acidic residues; sequence GDDEDDDDDDDDETED. Basic and acidic residues predominate over residues 137-148; the sequence is REPPRWTQPERM. 2 consecutive Ig-like C2-type domains span residues 140–233 and 242–342; these read PRWT…YQLD and PILQ…FWLH. Cysteine 165 and cysteine 217 form a disulfide bridge. 5 N-linked (GlcNAc...) asparagine glycosylation sites follow: asparagine 214, asparagine 251, asparagine 283, asparagine 303, and asparagine 315. A disulfide bridge connects residues cysteine 264 and cysteine 326. The helical transmembrane segment at 363-383 threads the bilayer; that stretch reads ITVLIVVTSTIVFILLVIIVI. Residues 384–802 lie on the Cytoplasmic side of the membrane; it reads THLMKVPSKK…HQQHNGAIPT (419 aa). The Protein kinase domain maps to 462-751; the sequence is LTLGKPLGEG…LTVTSTNEYL (290 aa). ATP-binding positions include 468–476 and lysine 498; that span reads LGEGCFGQV. Catalysis depends on aspartate 607, which acts as the Proton acceptor. Phosphotyrosine; by autocatalysis occurs at positions 637, 638, 714, and 750.

Belongs to the protein kinase superfamily. Tyr protein kinase family. Fibroblast growth factor receptor subfamily. As to quaternary structure, monomer. Homodimer after ligand binding. In terms of processing, autophosphorylated. Binding of FGF family members together with heparan sulfate proteoglycan or heparin promotes receptor dimerization and autophosphorylation on tyrosine residues. Autophosphorylation occurs in trans between the two FGFR molecules present in the dimer.

The protein localises to the cell membrane. It catalyses the reaction L-tyrosyl-[protein] + ATP = O-phospho-L-tyrosyl-[protein] + ADP + H(+). Its activity is regulated as follows. Present in an inactive conformation in the absence of bound ligand. Ligand binding leads to dimerization and activation by autophosphorylation on tyrosine residues. Tyrosine-protein kinase that acts as a cell-surface receptor for fibroblast growth factors and plays an essential role in the regulation of cell proliferation, differentiation and apoptosis. Plays an essential role in the regulation of chondrocyte differentiation, proliferation and apoptosis, and is required for normal skeleton development. Regulates both osteogenesis and postnatal bone mineralization by osteoblasts. Promotes apoptosis in chondrocytes, but can also promote cancer cell proliferation. Phosphorylates PLCG1, CBL and FRS2. Ligand binding leads to the activation of several signaling cascades. Activation of PLCG1 leads to the production of the cellular signaling molecules diacylglycerol and inositol 1,4,5-trisphosphate. Phosphorylation of FRS2 triggers recruitment of GRB2, GAB1, PIK3R1 and SOS1, and mediates activation of RAS, MAPK1/ERK2, MAPK3/ERK1 and the MAP kinase signaling pathway, as well as of the AKT1 signaling pathway. In Xenopus laevis (African clawed frog), this protein is Fibroblast growth factor receptor 3 (fgfr3).